The sequence spans 491 residues: Cholesterol 22-monohydroxylase CYP90B51 (491 aa).

The chain crosses the membrane as a helical span at residues Ile-6–Ile-26. Cys-437 contacts heme.

It belongs to the cytochrome P450 family. Mainly expressed in leaves and seed pods and, to a lower extent, in flowers and stems.

The protein resides in the membrane. It carries out the reaction cholesterol + reduced [NADPH--hemoprotein reductase] + O2 = (22S)-22-hydroxycholesterol + oxidized [NADPH--hemoprotein reductase] + H2O + H(+). Its pathway is steroid metabolism; cholesterol metabolism. Functionally, canonical brassinosteroid (BR)-biosynthetic enzyme capable of converting cholesterol to 22S-hydroxycholesterol via sterol-C22 hydroxylation. In Trigonella foenum-graecum (Fenugreek), this protein is Cholesterol 22-monohydroxylase CYP90B51.